A 303-amino-acid chain; its full sequence is N-acetyl-D-glucosamine kinase (303 aa).

ATP is bound by residues 4 to 11 (GFDIGGTK) and 133 to 140 (GVGGGLVL). Zn(2+)-binding residues include histidine 157, cysteine 177, cysteine 179, and cysteine 184.

It belongs to the ROK (NagC/XylR) family. NagK subfamily.

It carries out the reaction N-acetyl-D-glucosamine + ATP = N-acetyl-D-glucosamine 6-phosphate + ADP + H(+). It functions in the pathway cell wall biogenesis; peptidoglycan recycling. Catalyzes the phosphorylation of N-acetyl-D-glucosamine (GlcNAc) derived from cell-wall degradation, yielding GlcNAc-6-P. The chain is N-acetyl-D-glucosamine kinase from Salmonella agona (strain SL483).